We begin with the raw amino-acid sequence, 1154 residues long: Large proline-rich protein BAG6 (1154 aa).

M1 carries the post-translational modification N-acetylmethionine. One can recognise a Ubiquitin-like domain in the interval 17 to 92 (LEVLVKTLDS…HLVERAPPQT (76 aa)). Disordered stretches follow at residues 87 to 125 (RAPP…ASVH), 186 to 274 (RGGT…HPSP), 387 to 442 (TMTG…SSHP), 463 to 531 (QDSG…QGAG), and 568 to 626 (AQAQ…SAAD). The residue at position 96 (S96) is a Phosphoserine. Low complexity predominate over residues 96–112 (SGASSGTGSASATHGGA). T117 carries the phosphothreonine modification. Residues 209 to 218 (VALNSQTSEP) show a composition bias toward polar residues. Residues 237–271 (RPPTQTPELAPSGPAPAGPAPAGPAPAPETNAPNH) form repeat 1. Positions 237–658 (RPPTQTPELA…MASPTITVAM (422 aa)) are 4 X 29 AA approximate repeats. A compositionally biased stretch (pro residues) spans 249–263 (GPAPAGPAPAGPAPA). Low complexity predominate over residues 400–409 (GAEAATPGSA). Residues 410–426 (QATSLPPSSTTVDSSTE) are compositionally biased toward polar residues. Copy 2 of the repeat occupies 416–444 (PSSTTVDSSTEGAPPPGPAPPPASSHPRV). Pro residues-rich tracts occupy residues 428–439 (APPPGPAPPPAS) and 508–521 (PTPP…PGGP). 2 stretches are compositionally biased toward low complexity: residues 568 to 581 (AQAQ…AQAP) and 591 to 609 (PATA…TAGP). A run of 2 repeats spans residues 597–624 (SAGT…QPSA) and 630–658 (SQLL…TVAM). Residues 611 to 622 (PGGPAQPPPPQP) are compositionally biased toward pro residues. Disordered stretches follow at residues 673-719 (QASQ…ESLP) and 968-1154 (PPQT…ADDP). Residues 678-702 (APPPPPPPPPPPPAPEQQSTPPPGS) show a composition bias toward pro residues. Phosphoserine is present on residues S986 and S995. Over residues 1029–1042 (AEPWAAAVPPEWVP) the composition is skewed to low complexity. The interval 1032–1062 (WAAAVPPEWVPIIQQDIQSQRKVKPQPPLSD) is required for interaction with GET4. The short motif at 1034-1076 (AAVPPEWVPIIQQDIQSQRKVKPQPPLSDAYLSGMPAKRRKTM) is the Nuclear localization site element. Positions 1044–1154 (IQQDIQSQRK…NAHRAFADDP (111 aa)) are sufficient for the delivery of client proteins to the endoplasmic reticulum. The residue at position 1075 (T1075) is a Phosphothreonine. The segment at 1080-1137 (GPQLLLSEAVSRAAKAAGARPLTSPESLSRDLEAPEVQESYRQQLRSDIQKRLQEDPN) is BAG-similar domain, required and sufficient for interaction with UBL4A. Positions 1088-1098 (AVSRAAKAAGA) are enriched in low complexity. Phosphoserine is present on residues S1103 and S1139.

As to quaternary structure, component of the BAG6/BAT3 complex, also named BAT3 complex, at least composed of BAG6, UBL4A and GET4/TRC35. Interacts with GET4; the interaction is direct and localizes BAG6 in the cytosol. Interacts with UBL4A; the interaction is direct and required for UBL4A protein stability. Interacts with AIFM1. Interacts with HSPA2. Interacts with CTCFL. Interacts with p300/EP300. Interacts (via ubiquitin-like domain) with RNF126; required for BAG6-dependent ubiquitination of proteins mislocalized to the cytosol. Interacts (via ubiquitin-like domain) with SGTA; SGTA competes with RNF126 by binding the same region of BAG6, thereby promoting deubiquitination of BAG6-target proteins and rescuing them from degradation. Interacts with ricin A chain. Interacts with VCP and AMFR; both form the VCP/p97-AMFR/gp78 complex. Interacts with SYVN1. Interacts with USP13; the interaction is direct and may mediate UBL4A deubiquitination. Interacts with ZFAND2B. Interacts with KPNA2. Interacts with UBQLN4. In terms of processing, ricin can induce a cleavage by the caspase CASP3. The released C-terminal peptide induces apoptosis.

Its subcellular location is the cytoplasm. The protein localises to the cytosol. The protein resides in the nucleus. It is found in the secreted. It localises to the extracellular exosome. In terms of biological role, ATP-independent molecular chaperone preventing the aggregation of misfolded and hydrophobic patches-containing proteins. Functions as part of a cytosolic protein quality control complex, the BAG6/BAT3 complex, which maintains these client proteins in a soluble state and participates in their proper delivery to the endoplasmic reticulum or alternatively can promote their sorting to the proteasome where they undergo degradation. The BAG6/BAT3 complex is involved in the post-translational delivery of tail-anchored/type II transmembrane proteins to the endoplasmic reticulum membrane. Recruited to ribosomes, it interacts with the transmembrane region of newly synthesized tail-anchored proteins and together with SGTA and ASNA1 mediates their delivery to the endoplasmic reticulum. Client proteins that cannot be properly delivered to the endoplasmic reticulum are ubiquitinated by RNF126, an E3 ubiquitin-protein ligase associated with BAG6 and are sorted to the proteasome. SGTA which prevents the recruitment of RNF126 to BAG6 may negatively regulate the ubiquitination and the proteasomal degradation of client proteins. Similarly, the BAG6/BAT3 complex also functions as a sorting platform for proteins of the secretory pathway that are mislocalized to the cytosol either delivering them to the proteasome for degradation or to the endoplasmic reticulum. The BAG6/BAT3 complex also plays a role in the endoplasmic reticulum-associated degradation (ERAD), a quality control mechanism that eliminates unwanted proteins of the endoplasmic reticulum through their retrotranslocation to the cytosol and their targeting to the proteasome. It maintains these retrotranslocated proteins in an unfolded yet soluble state condition in the cytosol to ensure their proper delivery to the proteasome. BAG6 is also required for selective ubiquitin-mediated degradation of defective nascent chain polypeptides by the proteasome. In this context, it may participate in the production of antigenic peptides and play a role in antigen presentation in immune response. BAG6 is also involved in endoplasmic reticulum stress-induced pre-emptive quality control, a mechanism that selectively attenuates the translocation of newly synthesized proteins into the endoplasmic reticulum and reroutes them to the cytosol for proteasomal degradation. BAG6 may ensure the proper degradation of these proteins and thereby protects the endoplasmic reticulum from protein overload upon stress. By inhibiting the polyubiquitination and subsequent proteasomal degradation of HSPA2 it may also play a role in the assembly of the synaptonemal complex during spermatogenesis. Also positively regulates apoptosis by interacting with and stabilizing the proapoptotic factor AIFM1. By controlling the steady-state expression of the IGF1R receptor, indirectly regulates the insulin-like growth factor receptor signaling pathway. Involved in DNA damage-induced apoptosis: following DNA damage, accumulates in the nucleus and forms a complex with p300/EP300, enhancing p300/EP300-mediated p53/TP53 acetylation leading to increase p53/TP53 transcriptional activity. When nuclear, may also act as a component of some chromatin regulator complex that regulates histone 3 'Lys-4' dimethylation (H3K4me2). Its function is as follows. Released extracellularly via exosomes, it is a ligand of the natural killer/NK cells receptor NCR3 and stimulates NK cells cytotoxicity. It may thereby trigger NK cells cytotoxicity against neighboring tumor cells and immature myeloid dendritic cells (DC). Functionally, may mediate ricin-induced apoptosis. This is Large proline-rich protein BAG6 from Mus musculus (Mouse).